We begin with the raw amino-acid sequence, 197 residues long: MKVLQEKILNEGKVLSGDVLKVDAFLNHQIDPVLMQEIGKEFAKRFKEENITKIVTIESSGIAPSVMAALELGVKVIFARKRKSLTLQDNMYVANVYSFTKQETNEISLSRNHIDENDRVLIIDDFLANGQAALGLMSLVEQAGASIAGIGIVIEKAFQDGGKKLREQGVRVESLAEIASLDNGTVTFVQQETAEVK.

Xanthine-binding residues include Leu-20 and Asn-27. 128–132 is a binding site for 5-phospho-alpha-D-ribose 1-diphosphate; it reads ANGQA. Position 156 (Lys-156) interacts with xanthine.

Belongs to the purine/pyrimidine phosphoribosyltransferase family. Xpt subfamily. Homodimer.

Its subcellular location is the cytoplasm. The catalysed reaction is XMP + diphosphate = xanthine + 5-phospho-alpha-D-ribose 1-diphosphate. It participates in purine metabolism; XMP biosynthesis via salvage pathway; XMP from xanthine: step 1/1. Its function is as follows. Converts the preformed base xanthine, a product of nucleic acid breakdown, to xanthosine 5'-monophosphate (XMP), so it can be reused for RNA or DNA synthesis. The protein is Xanthine phosphoribosyltransferase of Bacillus cereus (strain B4264).